The primary structure comprises 254 residues: 3-deoxy-manno-octulosonate cytidylyltransferase (254 aa).

This sequence belongs to the KdsB family.

The protein localises to the cytoplasm. The enzyme catalyses 3-deoxy-alpha-D-manno-oct-2-ulosonate + CTP = CMP-3-deoxy-beta-D-manno-octulosonate + diphosphate. It participates in nucleotide-sugar biosynthesis; CMP-3-deoxy-D-manno-octulosonate biosynthesis; CMP-3-deoxy-D-manno-octulosonate from 3-deoxy-D-manno-octulosonate and CTP: step 1/1. The protein operates within bacterial outer membrane biogenesis; lipopolysaccharide biosynthesis. Activates KDO (a required 8-carbon sugar) for incorporation into bacterial lipopolysaccharide in Gram-negative bacteria. This is 3-deoxy-manno-octulosonate cytidylyltransferase from Pseudomonas fluorescens (strain ATCC BAA-477 / NRRL B-23932 / Pf-5).